Consider the following 1220-residue polypeptide: DNA-directed RNA polymerase subunit beta' (1220 aa).

Residues Cys-61, Cys-63, Cys-76, and Cys-79 each contribute to the Zn(2+) site. Mg(2+) contacts are provided by Asp-450, Asp-452, and Asp-454. The disordered stretch occupies residues 1197–1220 (QPESESEEASDIPKLDDVAKTFDN). A compositionally biased stretch (basic and acidic residues) spans 1207 to 1220 (DIPKLDDVAKTFDN).

This sequence belongs to the RNA polymerase beta' chain family. In terms of assembly, the RNAP catalytic core consists of 2 alpha, 1 beta, 1 beta' and 1 omega subunit. When a sigma factor is associated with the core the holoenzyme is formed, which can initiate transcription. Requires Mg(2+) as cofactor. The cofactor is Zn(2+).

The catalysed reaction is RNA(n) + a ribonucleoside 5'-triphosphate = RNA(n+1) + diphosphate. In terms of biological role, DNA-dependent RNA polymerase catalyzes the transcription of DNA into RNA using the four ribonucleoside triphosphates as substrates. In Leuconostoc mesenteroides subsp. mesenteroides (strain ATCC 8293 / DSM 20343 / BCRC 11652 / CCM 1803 / JCM 6124 / NCDO 523 / NBRC 100496 / NCIMB 8023 / NCTC 12954 / NRRL B-1118 / 37Y), this protein is DNA-directed RNA polymerase subunit beta'.